The chain runs to 456 residues: Bifunctional protein GlmU (456 aa).

The interval 1–229 is pyrophosphorylase; it reads MSNSAMSVVI…LSEVEGVNNR (229 aa). Residues 11–14, Lys25, Gln76, 81–82, 103–105, Gly140, Glu154, Asn169, and Asn227 each bind UDP-N-acetyl-alpha-D-glucosamine; these read LAAG, GT, and YGD. Asp105 serves as a coordination point for Mg(2+). Asn227 contacts Mg(2+). A linker region spans residues 230–250; that stretch reads LQLARLERVYQAEQAEKLLLA. An N-acetyltransferase region spans residues 251–456; it reads GVMLRDPARF…QGWQRPVKKK (206 aa). UDP-N-acetyl-alpha-D-glucosamine-binding residues include Arg333 and Lys351. Residue His363 is the Proton acceptor of the active site. Tyr366 and Asn377 together coordinate UDP-N-acetyl-alpha-D-glucosamine. Acetyl-CoA contacts are provided by residues Ala380, 386–387, Ser405, Ala423, and Arg440; that span reads NY.

It in the N-terminal section; belongs to the N-acetylglucosamine-1-phosphate uridyltransferase family. This sequence in the C-terminal section; belongs to the transferase hexapeptide repeat family. As to quaternary structure, homotrimer. It depends on Mg(2+) as a cofactor.

The protein localises to the cytoplasm. It catalyses the reaction alpha-D-glucosamine 1-phosphate + acetyl-CoA = N-acetyl-alpha-D-glucosamine 1-phosphate + CoA + H(+). The enzyme catalyses N-acetyl-alpha-D-glucosamine 1-phosphate + UTP + H(+) = UDP-N-acetyl-alpha-D-glucosamine + diphosphate. It participates in nucleotide-sugar biosynthesis; UDP-N-acetyl-alpha-D-glucosamine biosynthesis; N-acetyl-alpha-D-glucosamine 1-phosphate from alpha-D-glucosamine 6-phosphate (route II): step 2/2. Its pathway is nucleotide-sugar biosynthesis; UDP-N-acetyl-alpha-D-glucosamine biosynthesis; UDP-N-acetyl-alpha-D-glucosamine from N-acetyl-alpha-D-glucosamine 1-phosphate: step 1/1. The protein operates within bacterial outer membrane biogenesis; LPS lipid A biosynthesis. In terms of biological role, catalyzes the last two sequential reactions in the de novo biosynthetic pathway for UDP-N-acetylglucosamine (UDP-GlcNAc). The C-terminal domain catalyzes the transfer of acetyl group from acetyl coenzyme A to glucosamine-1-phosphate (GlcN-1-P) to produce N-acetylglucosamine-1-phosphate (GlcNAc-1-P), which is converted into UDP-GlcNAc by the transfer of uridine 5-monophosphate (from uridine 5-triphosphate), a reaction catalyzed by the N-terminal domain. This chain is Bifunctional protein GlmU, found in Klebsiella pneumoniae subsp. pneumoniae (strain ATCC 700721 / MGH 78578).